Consider the following 626-residue polypeptide: Chaperone protein DnaK (626 aa).

Position 175 is a phosphothreonine; by autocatalysis (Thr-175). 3 disordered regions span residues 469–488 (DKGT…GLPK), 498–517 (AEAH…TRNQ), and 583–626 (AQQG…KDNK). Over residues 498–516 (AEAHEAEDKKRKEDAETRN) the composition is skewed to basic and acidic residues. The span at 609–626 (SDDDVVDAEVVDDDKDNK) shows a compositional bias: acidic residues.

The protein belongs to the heat shock protein 70 family.

Functionally, acts as a chaperone. This chain is Chaperone protein DnaK, found in Bifidobacterium adolescentis (strain ATCC 15703 / DSM 20083 / NCTC 11814 / E194a).